Consider the following 635-residue polypeptide: Threonine--tRNA ligase (635 aa).

The 61-residue stretch at 1-61 (MVSIRLPDGS…DHDASLAIVT (61 aa)) folds into the TGS domain. Residues 242-533 (DHRKLGKQLD…LIEHHAGAMP (292 aa)) are catalytic. Zn(2+) is bound by residues cysteine 333, histidine 384, and histidine 510.

Belongs to the class-II aminoacyl-tRNA synthetase family. Homodimer. Zn(2+) serves as cofactor.

It localises to the cytoplasm. It catalyses the reaction tRNA(Thr) + L-threonine + ATP = L-threonyl-tRNA(Thr) + AMP + diphosphate + H(+). Functionally, catalyzes the attachment of threonine to tRNA(Thr) in a two-step reaction: L-threonine is first activated by ATP to form Thr-AMP and then transferred to the acceptor end of tRNA(Thr). Also edits incorrectly charged L-seryl-tRNA(Thr). This Burkholderia multivorans (strain ATCC 17616 / 249) protein is Threonine--tRNA ligase.